Here is a 291-residue protein sequence, read N- to C-terminus: Geranyl diphosphate 2-C-methyltransferase (291 aa).

It belongs to the geranyl diphosphate 2-C-methyltransferase family. The cofactor is Mg(2+).

The enzyme catalyses (2E)-geranyl diphosphate + S-adenosyl-L-methionine = (E)-2-methylgeranyl diphosphate + S-adenosyl-L-homocysteine + H(+). Functionally, catalyzes the SAM-dependent methylation of geranyl diphosphate (GPP) to yield (E)-2-methylgeranyl diphosphate (2-MeGPP). This is Geranyl diphosphate 2-C-methyltransferase from Streptomyces ambofaciens (strain ATCC 23877 / 3486 / DSM 40053 / JCM 4204 / NBRC 12836 / NRRL B-2516).